The chain runs to 428 residues: MKREKVTSLNGEIHIPGDKSISHRSVMFGALAEGTTTVKNFLPGADCLSTIACFRKMGVSIEQNGSDVTIYGKGIDALCEPDSLLDVGNSGTTIRLMLGILAGRPFHSTVAGDESIAKRPMKRVTEPLKQMGAAIDGRADGGFTPLSVRGGQLKGIDYVSPVASAQIKSAVLLAGLQAEGTTTVTEPHKSRDHTERMLNAFGAELAETETSASVTGGQKLRGADIFVPGDISSAAFFLAAGAVVPGSRIVLKNVGLNPTRTGMIDVLKQMGASLEVIPSEADSAEPYGDLVIETSALKAAEIGGEIIPRLIDEIPIIALLATQAEGTTVIKDAAELKVKETNRIDTVVSELRKIGADIEPTEDGMKIHGKKTLAGGADVSSHGDHRIGMMLGVASCLTEEPIDIRDTEAIHVSYPTFFEHLDQLAKKA.

Positions 19, 20, and 24 each coordinate 3-phosphoshikimate. Lysine 19 serves as a coordination point for phosphoenolpyruvate. The phosphoenolpyruvate site is built by glycine 91 and arginine 119. 3-phosphoshikimate is bound by residues serine 164, glutamine 166, aspartate 312, and lysine 339. Glutamine 166 provides a ligand contact to phosphoenolpyruvate. Aspartate 312 acts as the Proton acceptor in catalysis. Residues arginine 343 and arginine 386 each contribute to the phosphoenolpyruvate site.

This sequence belongs to the EPSP synthase family. As to quaternary structure, monomer.

Its subcellular location is the cytoplasm. It carries out the reaction 3-phosphoshikimate + phosphoenolpyruvate = 5-O-(1-carboxyvinyl)-3-phosphoshikimate + phosphate. It functions in the pathway metabolic intermediate biosynthesis; chorismate biosynthesis; chorismate from D-erythrose 4-phosphate and phosphoenolpyruvate: step 6/7. Functionally, catalyzes the transfer of the enolpyruvyl moiety of phosphoenolpyruvate (PEP) to the 5-hydroxyl of shikimate-3-phosphate (S3P) to produce enolpyruvyl shikimate-3-phosphate and inorganic phosphate. This Bacillus velezensis (strain DSM 23117 / BGSC 10A6 / LMG 26770 / FZB42) (Bacillus amyloliquefaciens subsp. plantarum) protein is 3-phosphoshikimate 1-carboxyvinyltransferase.